The sequence spans 534 residues: Steroid hormone receptor family member cnr14 (534 aa).

Disordered stretches follow at residues 30–53 (SGKT…QWSH) and 119–139 (PATS…GHTT). Residues 119–130 (PATSVTSSLSPP) are compositionally biased toward low complexity. Residues 148–223 (ISFCKVCGDK…SGMSKDSVRQ (76 aa)) constitute a DNA-binding region (nuclear receptor). 2 consecutive NR C4-type zinc fingers follow at residues 151–171 (CKVC…CEGC) and 187–211 (CLKQ…FKKC). Positions 252-493 (EVDAVYEAVL…PPLVVEMFQL (242 aa)) constitute an NR LBD domain. The tract at residues 502–534 (HNNQENQYTPAPEHQSPQPQQPTPNQQQTPVHC) is disordered. A compositionally biased stretch (low complexity) spans 511–534 (PAPEHQSPQPQQPTPNQQQTPVHC).

The protein belongs to the nuclear hormone receptor family. NR1 subfamily. As to expression, most abundant in embryos.

Its subcellular location is the nucleus. Transcriptional regulator which is involved in the sex determination and X chromosome dosage compensation pathways. Directly binds to five 5'-A(G/C)(G/T)(T/G)C(A/G)-3' sites in the promoter of sex-determining factor xol-1 to negatively regulate its expression and promote hermaphrodite development. Together with fox-1 is involved in making the distinction between one and two X-chromosomes. Plays a role in the fox-1-mediated repression of the functionally active isoform (isoform b) of the sex-determining factor xol-1 gene to promote hermaphrodite development. Plays a role in the association of the dosage compensation complex proteins dpy-27 and sdc-3 with the hermaphrodite X chromosomes. In Caenorhabditis elegans, this protein is Steroid hormone receptor family member cnr14.